A 378-amino-acid chain; its full sequence is Biotin synthase (378 aa).

The Radical SAM core domain occupies 68–292 (NEVQISTLLS…IAVTRICCPS (225 aa)). Positions 83, 87, and 90 each coordinate [4Fe-4S] cluster. Positions 129, 160, 220, and 296 each coordinate [2Fe-2S] cluster.

It belongs to the radical SAM superfamily. Biotin synthase family. As to quaternary structure, homodimer. The cofactor is [4Fe-4S] cluster. [2Fe-2S] cluster is required as a cofactor.

It carries out the reaction (4R,5S)-dethiobiotin + (sulfur carrier)-SH + 2 reduced [2Fe-2S]-[ferredoxin] + 2 S-adenosyl-L-methionine = (sulfur carrier)-H + biotin + 2 5'-deoxyadenosine + 2 L-methionine + 2 oxidized [2Fe-2S]-[ferredoxin]. The protein operates within cofactor biosynthesis; biotin biosynthesis; biotin from 7,8-diaminononanoate: step 2/2. In terms of biological role, catalyzes the conversion of dethiobiotin (DTB) to biotin by the insertion of a sulfur atom into dethiobiotin via a radical-based mechanism. The sequence is that of Biotin synthase from Psychrobacter arcticus (strain DSM 17307 / VKM B-2377 / 273-4).